Consider the following 565-residue polypeptide: Mediator of RNA polymerase II transcription subunit 17 (565 aa).

Polar residues predominate over residues 138 to 152 (TSLNSDRLGQDSNDN). Positions 138-160 (TSLNSDRLGQDSNDNQESKATDS) are disordered.

It belongs to the Mediator complex subunit 17 family. Component of the Mediator complex.

The protein localises to the nucleus. Its function is as follows. Component of the Mediator complex, a coactivator involved in the regulated transcription of nearly all RNA polymerase II-dependent genes. Mediator functions as a bridge to convey information from gene-specific regulatory proteins to the basal RNA polymerase II transcription machinery. Mediator is recruited to promoters by direct interactions with regulatory proteins and serves as a scaffold for the assembly of a functional preinitiation complex with RNA polymerase II and the general transcription factors. The protein is Mediator of RNA polymerase II transcription subunit 17 (SRB4) of Candida albicans (strain SC5314 / ATCC MYA-2876) (Yeast).